Reading from the N-terminus, the 244-residue chain is Transcription factor Sox-12 (244 aa).

Positions M1–S22 are disordered. Residues I31 to K99 constitute a DNA-binding region (HMG box). Disordered regions lie at residues R101–T137 and G152–L193. 2 stretches are compositionally biased toward polar residues: residues S120–T137 and H176–S186.

In terms of tissue distribution, expressed at a low level in embryos, and in the adult lung, ovary, skeletal muscle, testis, brain and heart.

The protein localises to the nucleus. Functionally, transcription factor that binds to the sequence 5'-AACAAT-3'. Acts as a transcriptional activator. The sequence is that of Transcription factor Sox-12 (sox12) from Xenopus laevis (African clawed frog).